Consider the following 73-residue polypeptide: Large ribosomal subunit protein bL31 (73 aa).

Residues 34 to 43 (KMNLDIDPKS) are compositionally biased toward basic and acidic residues. The disordered stretch occupies residues 34 to 54 (KMNLDIDPKSHPAWTGGTQQM).

It belongs to the bacterial ribosomal protein bL31 family. Type A subfamily. In terms of assembly, part of the 50S ribosomal subunit.

Functionally, binds the 23S rRNA. This Rhodopseudomonas palustris (strain BisA53) protein is Large ribosomal subunit protein bL31.